A 451-amino-acid polypeptide reads, in one-letter code: 3-phosphoshikimate 1-carboxyvinyltransferase (451 aa).

The 3-phosphoshikimate site is built by Lys38, Ser39, and Arg43. Lys38 contacts phosphoenolpyruvate. Residues Gly111 and Arg140 each contribute to the phosphoenolpyruvate site. Positions 185, 187, 335, and 362 each coordinate 3-phosphoshikimate. Gln187 lines the phosphoenolpyruvate pocket. Residue Asp335 is the Proton acceptor of the active site. Residues Arg366 and Arg408 each contribute to the phosphoenolpyruvate site.

The protein belongs to the EPSP synthase family. As to quaternary structure, monomer.

It is found in the cytoplasm. It carries out the reaction 3-phosphoshikimate + phosphoenolpyruvate = 5-O-(1-carboxyvinyl)-3-phosphoshikimate + phosphate. The protein operates within metabolic intermediate biosynthesis; chorismate biosynthesis; chorismate from D-erythrose 4-phosphate and phosphoenolpyruvate: step 6/7. In terms of biological role, catalyzes the transfer of the enolpyruvyl moiety of phosphoenolpyruvate (PEP) to the 5-hydroxyl of shikimate-3-phosphate (S3P) to produce enolpyruvyl shikimate-3-phosphate and inorganic phosphate. The protein is 3-phosphoshikimate 1-carboxyvinyltransferase of Crocosphaera subtropica (strain ATCC 51142 / BH68) (Cyanothece sp. (strain ATCC 51142)).